The chain runs to 2368 residues: MARFGDEMPGRYGAGGGGSGPAAGVVVGAAGGRGAGGSRQGGQPGAQRMYKQSMAQRARTMALYNPIPVRQNCLTVNRSLFLFSEDNVVRKYAKKITEWPPFEYMILATIIANCIVLALEQHLPDDDKTPMSERLDDTEPYFIGIFCFEAGIKIVALGFAFHKGSYLRNGWNVMDFVVVLTGILATVGTEFDLRTLRAVRVLRPLKLVSGIPSLQVVLKSIMKAMIPLLQIGLLLFFAILIFAIIGLEFYMGKFHTTCFEEGTDDIQGESPAPCGTEEPARTCPNGTKCQPYWEGPNNGITQFDNILFAVLTVFQCITMEGWTDLLYNSNDASGNTWNWLYFIPLIIIGSFFMLNLVLGVLSGEFAKERERVENRRAFLKLRRQQQIERELNGYMEWISKAEEVILAEDETDVEQRHPFDGALRRATLKKSKTDLLNPEEAEDQLADIASVGSPFARASIKSAKLENSTFFHKKERRMRFYIRRMVKTQAFYWTVLSLVALNTLCVAIVHYNQPEWLSDFLYYAEFIFLGLFMSEMFIKMYGLGTRPYFHSSFNCFDCGVIIGSIFEVIWAVIKPGTSFGISVLRALRLLRIFKVTKYWASLRNLVVSLLNSMKSIISLLFLLFLFIVVFALLGMQLFGGQFNFDEGTPPTNFDTFPAAIMTVFQILTGEDWNEVMYDGIKSQGGVQGGMVFSIYFIVLTLFGNYTLLNVFLAIAVDNLANAQELTKDEQEEEEAANQKLALQKAKEVAEVSPLSAANMSIAVKEQQKNQKPTKSVWEQRTSEMRKQNLLASREALYGDAAERWPTPYARPLRPDVKTHLDRPLVVDPQENRNNNTNKSRAPEALRPTARPRESARDPDARRAWPGSPERAPGREGPYGRESEPQQREHAPPREHAPWDADTERAKAGDAPRRHTHRPVAEGEPRRHRARRRPGDEPDDRPERRPRPRDATRPARAADGEGDDGERKRRHRHGPPAHDDRERRHRRRKENQGSGVPVSGPNLSTTRPIQQDLGRQDLPLAEDLDNMKNNKLATGEPASPHDSLGHSGLPPSPAKIGNSTNPGPALATNPQNAASRRTPNNPGNPSNPGPPKTPENSLIVTNPSSTQPNSAKTARKPEHMAVEIPPACPPLNHTVVQVNKNANPDPLPKKEEEKKEEEEADPGEDGPKPMPPYSSMFILSTTNPLRRLCHYILNLRYFEMCILMVIAMSSIALAAEDPVQPNAPRNNVLRYFDYVFTGVFTFEMVIKMIDLGLVLHQGAYFRDLWNILDFIVVSGALVAFAFTGNSKGKDINTIKSLRVLRVLRPLKTIKRLPKLKAVFDCVVNSLKNVFNILIVYMLFMFIFAVVAVQLFKGKFFHCTDESKEFERDCRGKYLLYEKNEVKARDREWKKYEFHYDNVLWALLTLFTVSTGEGWPQVLKHSVDATFENQGPSPGYRMEMSIFYVVYFVVFPFFFVNIFVALIIITFQEQGDKMMEEYSLEKNERACIDFAISAKPLTRHMPQNKQSFQYRMWQFVVSPPFEYTIMAMIALNTIVLMMKFYGASVAYENALRVFNIVFTSLFSLECVLKVMAFGILNYFRDAWNIFDFVTVLGSITDILVTEFGNNFINLSFLRLFRAARLIKLLRQGYTIRILLWTFVQSFKALPYVCLLIAMLFFIYAIIGMQVFGNIGIDGEDEDSDEDEFQITEHNNFRTFFQALMLLFRSATGEAWHNIMLSCLSGKPCDKNSGILTADCGNEFAYFYFVSFIFLCSFLMLNLFVAVIMDNFEYLTRDSSILGPHHLDEYVRVWAEYDPAACGRIHYKDMYSLLRVISPPLGLGKKCPHRVACKRLLRMDLPVADDNTVHFNSTLMALIRTALDIKIAKGGADKQQMDAELRKEMMAIWPNLSQKTLDLLVTPHKSTDLTVGKIYAAMMIMEYYRQSKAKKLQAMREEQNRTPLMFQRMEPPSPTQEGGPSQNALPSTQLDPGGGLMAHEGGMKESPSWVTQRAQEMFQKTGTWSPERGPPIDMPNSQPNSQSVEMREMGTDGYSDSEHYLPMEGQTRAASMPRLPAENQRRRGRPRGNDLSTISDTSPMKRSASVLGPKARRLDDYSLERVPPEENQRYHQRRRDRGHRTSERSLGRYTDVDTGLGTDLSMTTQSGDLPSKDRDQDRGRPKDRKHRPHHHHHHHHHHPPAPDRDRYAQERPDTGRARAREQRWSRSPSEGREHTTHRQGSSSVSGSPAPSTSGTSTPRRGRRQLPQTPCTPRPLVSYSPAPRRPAARRMAGPAAPPGGSPRGCRRAPRWPAHAPEGPRPRGADYTEPDSPREPPGGAHDPAPRSPRTPRAAGCASPRHGRRLPNGYYAGHGAPRPRTARRGAHDAYSESEDDWC.

Residues 1–100 lie on the Cytoplasmic side of the membrane; sequence MARFGDEMPG…KYAKKITEWP (100 aa). The I repeat unit spans residues 65–365; the sequence is NPIPVRQNCL…LVLGVLSGEF (301 aa). The chain crosses the membrane as a helical span at residues 101–119; that stretch reads PFEYMILATIIANCIVLAL. Residues 120 to 138 are Extracellular-facing; the sequence is EQHLPDDDKTPMSERLDDT. A helical membrane pass occupies residues 139–156; that stretch reads EPYFIGIFCFEAGIKIVA. Residues 157 to 168 lie on the Cytoplasmic side of the membrane; the sequence is LGFAFHKGSYLR. Residues 169 to 184 form a helical membrane-spanning segment; it reads NGWNVMDFVVVLTGIL. Residues 185-192 are Extracellular-facing; that stretch reads ATVGTEFD. Residues 193-211 form a helical membrane-spanning segment; that stretch reads LRTLRAVRVLRPLKLVSGI. The Cytoplasmic portion of the chain corresponds to 212-230; it reads PSLQVVLKSIMKAMIPLLQ. Residues 231–250 traverse the membrane as a helical segment; that stretch reads IGLLLFFAILIFAIIGLEFY. Residues 251-337 are Extracellular-facing; it reads MGKFHTTCFE…NSNDASGNTW (87 aa). Residue asparagine 285 is glycosylated (N-linked (GlcNAc...) asparagine). Position 320 (glutamate 320) interacts with Ca(2+). Residues 338 to 362 traverse the membrane as a helical segment; the sequence is NWLYFIPLIIIGSFFMLNLVLGVLS. The Cytoplasmic segment spans residues 363–489; the sequence is GEFAKERERV…FYIRRMVKTQ (127 aa). The binding to the beta subunit stretch occupies residues 385–402; it reads QQIERELNGYMEWISKAE. At threonine 411 the chain carries Phosphothreonine. Phosphoserine is present on residues serine 450 and serine 453. An II repeat occupies 475–719; that stretch reads ERRMRFYIRR…VFLAIAVDNL (245 aa). The helical transmembrane segment at 490 to 509 threads the bilayer; the sequence is AFYWTVLSLVALNTLCVAIV. Residues 510–523 are Extracellular-facing; the sequence is HYNQPEWLSDFLYY. A helical membrane pass occupies residues 524–543; it reads AEFIFLGLFMSEMFIKMYGL. The Cytoplasmic portion of the chain corresponds to 544–551; the sequence is GTRPYFHS. The chain crosses the membrane as a helical span at residues 552–570; the sequence is SFNCFDCGVIIGSIFEVIW. Topologically, residues 571-580 are extracellular; that stretch reads AVIKPGTSFG. The chain crosses the membrane as a helical span at residues 581–599; sequence ISVLRALRLLRIFKVTKYW. The Cytoplasmic segment spans residues 600 to 618; sequence ASLRNLVVSLLNSMKSIIS. The chain crosses the membrane as a helical span at residues 619 to 638; it reads LLFLLFLFIVVFALLGMQLF. Topologically, residues 639 to 691 are extracellular; the sequence is GGQFNFDEGTPPTNFDTFPAAIMTVFQILTGEDWNEVMYDGIKSQGGVQGGMV. Glutamate 670 is a binding site for Ca(2+). A helical transmembrane segment spans residues 692–716; it reads FSIYFIVLTLFGNYTLLNVFLAIAV. Residues 717–1190 are Cytoplasmic-facing; the sequence is DNLANAQELT…TNPLRRLCHY (474 aa). Residues serine 752 and serine 755 each carry the phosphoserine modification. The disordered stretch occupies residues 762 to 781; that stretch reads AVKEQQKNQKPTKSVWEQRT. A compositionally biased stretch (polar residues) spans 769 to 779; sequence NQKPTKSVWEQ. Serine 792 is modified (phosphoserine). 2 disordered regions span residues 823 to 1117 and 1137 to 1170; these read PLVV…RKPE and VNKN…KPMP. 3 stretches are compositionally biased toward basic and acidic residues: residues 850–862, 871–924, and 932–958; these read RPRE…DARR, APGR…EGEP, and RPGD…RAAD. Phosphoserine occurs at positions 1038, 1042, and 1051. Polar residues predominate over residues 1056-1073; sequence GNSTNPGPALATNPQNAA. A compositionally biased stretch (low complexity) spans 1074–1083; sequence SRRTPNNPGN. Residues 1094–1111 are compositionally biased toward polar residues; that stretch reads ENSLIVTNPSSTQPNSAK. Positions 1153 to 1163 are enriched in acidic residues; the sequence is KKEEEEADPGE. One copy of the III repeat lies at 1182-1465; sequence NPLRRLCHYI…IFVALIIITF (284 aa). Residues 1191-1214 traverse the membrane as a helical segment; sequence ILNLRYFEMCILMVIAMSSIALAA. Residues 1215–1231 are Extracellular-facing; sequence EDPVQPNAPRNNVLRYF. A helical membrane pass occupies residues 1232-1251; it reads DYVFTGVFTFEMVIKMIDLG. Residues 1252-1258 lie on the Cytoplasmic side of the membrane; the sequence is LVLHQGA. The helical transmembrane segment at 1259–1282 threads the bilayer; it reads YFRDLWNILDFIVVSGALVAFAFT. Topologically, residues 1283–1293 are extracellular; it reads GNSKGKDINTI. Residues 1294–1311 traverse the membrane as a helical segment; that stretch reads KSLRVLRVLRPLKTIKRL. Topologically, residues 1312 to 1330 are cytoplasmic; that stretch reads PKLKAVFDCVVNSLKNVFN. A helical transmembrane segment spans residues 1331 to 1350; the sequence is ILIVYMLFMFIFAVVAVQLF. The Extracellular segment spans residues 1351–1437; it reads KGKFFHCTDE…QGPSPGYRME (87 aa). Glutamate 1411 is a binding site for Ca(2+). Residues 1438–1462 traverse the membrane as a helical segment; sequence MSIFYVVYFVVFPFFFVNIFVALII. Over 1463–1518 the chain is Cytoplasmic; the sequence is ITFQEQGDKMMEEYSLEKNERACIDFAISAKPLTRHMPQNKQSFQYRMWQFVVSPP. Residues 1502–1765 form an IV repeat; the sequence is NKQSFQYRMW…LFVAVIMDNF (264 aa). Residues 1519–1537 form a helical membrane-spanning segment; sequence FEYTIMAMIALNTIVLMMK. Residues 1538–1551 lie on the Extracellular side of the membrane; it reads FYGASVAYENALRV. A helical membrane pass occupies residues 1552–1573; that stretch reads FNIVFTSLFSLECVLKVMAFGI. Over 1574 to 1580 the chain is Cytoplasmic; sequence LNYFRDA. Residues 1581-1600 form a helical membrane-spanning segment; that stretch reads WNIFDFVTVLGSITDILVTE. The Extracellular segment spans residues 1601-1607; that stretch reads FGNNFIN. A glycan (N-linked (GlcNAc...) asparagine) is linked at asparagine 1607. Residues 1608-1626 traverse the membrane as a helical segment; sequence LSFLRLFRAARLIKLLRQG. The Cytoplasmic portion of the chain corresponds to 1627-1645; that stretch reads YTIRILLWTFVQSFKALPY. The chain crosses the membrane as a helical span at residues 1646–1665; it reads VCLLIAMLFFIYAIIGMQVF. At 1666-1737 the chain is on the extracellular side; that stretch reads GNIGIDGEDE…ILTADCGNEF (72 aa). Residues 1738-1763 traverse the membrane as a helical segment; the sequence is AYFYFVSFIFLCSFLMLNLFVAVIMD. Over 1764–2368 the chain is Cytoplasmic; it reads NFEYLTRDSS…AYSESEDDWC (605 aa). Threonine 1935 carries the phosphothreonine modification. The interval 1940-2368 is disordered; it reads QRMEPPSPTQ…AYSESEDDWC (429 aa). Composition is skewed to polar residues over residues 1948–1963 and 1981–1997; these read TQEG…STQL and SWVT…TGTW. Phosphoserine is present on residues serine 1998, serine 2016, serine 2028, serine 2030, serine 2071, and serine 2091. Residues 2008-2017 show a composition bias toward polar residues; sequence PNSQPNSQSV. The segment covering 2018–2034 has biased composition (basic and acidic residues); that stretch reads EMREMGTDGYSDSEHYL. Positions 2063–2073 are enriched in polar residues; the sequence is DLSTISDTSPM. 2 stretches are compositionally biased toward basic and acidic residues: residues 2085–2102 and 2143–2153; these read RRLD…ENQR and PSKDRDQDRGR. Residues 2154 to 2172 are compositionally biased toward basic residues; the sequence is PKDRKHRPHHHHHHHHHHP. A compositionally biased stretch (basic and acidic residues) spans 2173 to 2209; the sequence is PAPDRDRYAQERPDTGRARAREQRWSRSPSEGREHTT. The segment covering 2213 to 2231 has biased composition (low complexity); sequence GSSSVSGSPAPSTSGTSTP. A compositionally biased stretch (basic and acidic residues) spans 2289-2305; the sequence is EGPRPRGADYTEPDSPR.

This sequence belongs to the calcium channel alpha-1 subunit (TC 1.A.1.11) family. CACNA1A subfamily. Voltage-dependent calcium channels are multisubunit complexes, consisting of alpha-1, alpha-2, beta and delta subunits in a 1:1:1:1 ratio. The channel activity is directed by the pore-forming and voltage-sensitive alpha-1 subunit. In many cases, this subunit is sufficient to generate voltage-sensitive calcium channel activity. The auxiliary subunits beta and alpha-2/delta linked by a disulfide bridge regulate the channel activity. Interacts with CABP1. Interacts with the spider omega-agatoxin-IVA (AC P30288). Interacts with TSPOAP1. As to expression, brain specific; mainly found in the cerebellum, olfactory bulb, cerebral cortex, hippocampus, and inferior colliculus. In the hippocampus, expression occurs in pyramidal and granule neurons, as well as in interneurons. Purkinje cells contain predominantly P-type VSCC, the Q-type being a prominent calcium current in cerebellar granule cells.

It is found in the cell membrane. The catalysed reaction is Ca(2+)(in) = Ca(2+)(out). Its function is as follows. Voltage-sensitive calcium channels (VSCC) mediate the entry of calcium ions into excitable cells and are also involved in a variety of calcium-dependent processes, including muscle contraction, hormone or neurotransmitter release, gene expression, cell motility, cell division and cell death. The isoform alpha-1A gives rise to P and/or Q-type calcium currents. P/Q-type calcium channels belong to the 'high-voltage activated' (HVA) group and are specifically blocked by the spider omega-agatoxin-IVA (AC P54282). They are however insensitive to dihydropyridines (DHP). The polypeptide is Voltage-dependent P/Q-type calcium channel subunit alpha-1A (Mus musculus (Mouse)).